Reading from the N-terminus, the 152-residue chain is Ribosomal RNA large subunit methyltransferase H (152 aa).

Residues leucine 68, glycine 100, and 119–124 each bind S-adenosyl-L-methionine; that span reads LGVMTW.

Belongs to the RNA methyltransferase RlmH family. Homodimer.

Its subcellular location is the cytoplasm. It catalyses the reaction pseudouridine(1915) in 23S rRNA + S-adenosyl-L-methionine = N(3)-methylpseudouridine(1915) in 23S rRNA + S-adenosyl-L-homocysteine + H(+). Its function is as follows. Specifically methylates the pseudouridine at position 1915 (m3Psi1915) in 23S rRNA. The protein is Ribosomal RNA large subunit methyltransferase H of Rhodospirillum rubrum (strain ATCC 11170 / ATH 1.1.1 / DSM 467 / LMG 4362 / NCIMB 8255 / S1).